A 266-amino-acid polypeptide reads, in one-letter code: Large ribosomal subunit protein eL8 (266 aa).

Basic residues predominate over residues M1–K11. Disordered stretches follow at residues M1–V28 and E105–P134. Basic and acidic residues predominate over residues A116–T130.

The protein belongs to the eukaryotic ribosomal protein eL8 family. As to quaternary structure, component of the large ribosomal subunit.

It localises to the cytoplasm. Its function is as follows. Component of the large ribosomal subunit. The ribosome is a large ribonucleoprotein complex responsible for the synthesis of proteins in the cell. This is Large ribosomal subunit protein eL8 (rpl7a) from Takifugu rubripes (Japanese pufferfish).